A 286-amino-acid polypeptide reads, in one-letter code: Pyridoxal kinase PdxY (286 aa).

Ser8 contributes to the substrate binding site. 2 residues coordinate ATP: Asp110 and Glu147. Asp223 contacts substrate.

The protein belongs to the pyridoxine kinase family. PdxY subfamily. As to quaternary structure, homodimer. Mg(2+) is required as a cofactor.

The enzyme catalyses pyridoxal + ATP = pyridoxal 5'-phosphate + ADP + H(+). It functions in the pathway cofactor metabolism; pyridoxal 5'-phosphate salvage; pyridoxal 5'-phosphate from pyridoxal: step 1/1. Its function is as follows. Pyridoxal kinase involved in the salvage pathway of pyridoxal 5'-phosphate (PLP). Catalyzes the phosphorylation of pyridoxal to PLP. This chain is Pyridoxal kinase PdxY, found in Granulibacter bethesdensis (strain ATCC BAA-1260 / CGDNIH1).